Consider the following 122-residue polypeptide: Small ribosomal subunit protein uS13 (122 aa).

The segment at 99-122 is disordered; sequence RGQRTHTNARTRKGPAKAIAGKKK.

The protein belongs to the universal ribosomal protein uS13 family. In terms of assembly, part of the 30S ribosomal subunit. Forms a loose heterodimer with protein S19. Forms two bridges to the 50S subunit in the 70S ribosome.

Functionally, located at the top of the head of the 30S subunit, it contacts several helices of the 16S rRNA. In the 70S ribosome it contacts the 23S rRNA (bridge B1a) and protein L5 of the 50S subunit (bridge B1b), connecting the 2 subunits; these bridges are implicated in subunit movement. Contacts the tRNAs in the A and P-sites. This chain is Small ribosomal subunit protein uS13, found in Rhizobium meliloti (strain 1021) (Ensifer meliloti).